Reading from the N-terminus, the 53-residue chain is Large ribosomal subunit protein uL30 (53 aa).

It belongs to the universal ribosomal protein uL30 family. As to quaternary structure, part of the 50S ribosomal subunit.

The polypeptide is Large ribosomal subunit protein uL30 (Deinococcus geothermalis (strain DSM 11300 / CIP 105573 / AG-3a)).